Here is a 166-residue protein sequence, read N- to C-terminus: PTS system glucose-specific EIIA component (166 aa).

One can recognise a PTS EIIA type-1 domain in the interval 36 to 140; sequence DVVFSEKIVG…SVLTPIVISN (105 aa). Positions 73 and 88 each coordinate Zn(2+). Residue His88 is the Tele-phosphohistidine intermediate; for EIIA activity of the active site. His88 carries the phosphohistidine; by HPr modification.

As to quaternary structure, heterodimer with glycerol kinase (glpk). Zn(2+) serves as cofactor.

Its subcellular location is the cytoplasm. Functionally, the phosphoenolpyruvate-dependent sugar phosphotransferase system (sugar PTS), a major carbohydrate active transport system, catalyzes the phosphorylation of incoming sugar substrates concomitantly with their translocation across the cell membrane. The enzyme II complex composed of PtsG and Crr is involved in glucose transport. The polypeptide is PTS system glucose-specific EIIA component (crr) (Haemophilus influenzae (strain ATCC 51907 / DSM 11121 / KW20 / Rd)).